Consider the following 195-residue polypeptide: Cell division protein SepF (195 aa).

Positions 32-54 are disordered; the sequence is RYSKTNSSETLAPEEEEPIRNRR.

The protein belongs to the SepF family. In terms of assembly, homodimer. Interacts with FtsZ.

It localises to the cytoplasm. Its function is as follows. Cell division protein that is part of the divisome complex and is recruited early to the Z-ring. Probably stimulates Z-ring formation, perhaps through the cross-linking of FtsZ protofilaments. Its function overlaps with FtsA. The polypeptide is Cell division protein SepF (Gloeothece citriformis (strain PCC 7424) (Cyanothece sp. (strain PCC 7424))).